The sequence spans 371 residues: Deoxyhypusine synthase (371 aa).

Residues 112 to 116, 138 to 140, glutamate 144, and aspartate 245 each bind NAD(+); these read SNLVT and SAG. Spermidine is bound at residue 143–144; the sequence is EE. Aspartate 250 is a binding site for spermidine. Glycine 291 provides a ligand contact to NAD(+). Histidine 296 serves as a coordination point for spermidine. 316–317 contacts NAD(+); sequence TG. Residues 322–324 and 331–337 each bind spermidine; these read GSD and EAVSWGK. The active-site Nucleophile is the lysine 337. 350-351 contributes to the NAD(+) binding site; sequence EA.

It belongs to the deoxyhypusine synthase family. The cofactor is NAD(+).

The enzyme catalyses [eIF5A protein]-L-lysine + spermidine = [eIF5A protein]-deoxyhypusine + propane-1,3-diamine. Its pathway is protein modification; eIF5A hypusination. Its function is as follows. Catalyzes the NAD-dependent oxidative cleavage of spermidine and the subsequent transfer of the butylamine moiety of spermidine to the epsilon-amino group of a critical lysine residue of the eIF-5A precursor protein to form the intermediate deoxyhypusine residue. This is the first step of the post-translational modification of that lysine into an unusual amino acid residue named hypusine. Hypusination is unique to mature eIF-5A factor and is essential for its function. The sequence is that of Deoxyhypusine synthase from Caenorhabditis elegans.